The following is a 425-amino-acid chain: Glutamyl-tRNA reductase (425 aa).

Substrate contacts are provided by residues Thr-49 to Arg-52, Ser-109, Glu-114 to Gln-116, and Gln-120. The active-site Nucleophile is Cys-50. Gly-189 to Gly-194 is an NADP(+) binding site.

It belongs to the glutamyl-tRNA reductase family. Homodimer.

It carries out the reaction (S)-4-amino-5-oxopentanoate + tRNA(Glu) + NADP(+) = L-glutamyl-tRNA(Glu) + NADPH + H(+). The protein operates within porphyrin-containing compound metabolism; protoporphyrin-IX biosynthesis; 5-aminolevulinate from L-glutamyl-tRNA(Glu): step 1/2. Its pathway is porphyrin-containing compound metabolism; chlorophyll biosynthesis. In terms of biological role, catalyzes the NADPH-dependent reduction of glutamyl-tRNA(Glu) to glutamate 1-semialdehyde (GSA). The polypeptide is Glutamyl-tRNA reductase (Chlorobium phaeovibrioides (strain DSM 265 / 1930) (Prosthecochloris vibrioformis (strain DSM 265))).